A 155-amino-acid chain; its full sequence is Putative pre-16S rRNA nuclease (155 aa).

This sequence belongs to the YqgF nuclease family.

It localises to the cytoplasm. In terms of biological role, could be a nuclease involved in processing of the 5'-end of pre-16S rRNA. The polypeptide is Putative pre-16S rRNA nuclease (Paramagnetospirillum magneticum (strain ATCC 700264 / AMB-1) (Magnetospirillum magneticum)).